The following is a 379-amino-acid chain: (R)-2-hydroxyglutaryl-CoA dehydratase, subunit beta (379 aa).

The protein belongs to the FldB/FldC dehydratase alpha/beta subunit family. As to quaternary structure, the (R)-2-hydroxyglutaryl-CoA dehydratase enzyme system is a heterodimer composed of an alpha subunit (HgdA) and a beta subunit (HgdB). [4Fe-4S] cluster is required as a cofactor. The cofactor is FMN. Mg(2+) serves as cofactor.

It is found in the cytoplasm. It catalyses the reaction (R)-2-hydroxyglutaryl-CoA = (2E)-glutaconyl-CoA + H2O. It functions in the pathway amino-acid degradation; L-glutamate degradation via hydroxyglutarate pathway; crotonoyl-CoA from L-glutamate: step 4/5. With respect to regulation, activated by the HgdC. Reversibly inactivated by oxidants such as 2-nitrophenol, 3-nitrophenol, 4-nitrophenol, 4-nitrobenzoate, carbonyl cyanide 4-(trifluoromethoxy)phenylhydrazone (FCCP) and chloramphenicol. Irreversibly inactivated by oxidants such as hydroxylamine and nitrite. Functionally, involved in the fermentation of L-glutamate via the hydroxyglutarate pathway. Catalyzes the reversible syn-elimination of water from (R)-2-hydroxyglutaryl-CoA to yield (E)-glutaconyl-CoA. The dehydration mechanism involves a transient one electron reduction of the thioester from (R)-2-hydroxyglutaryl-CoA, generating a ketyl radical. Prior to (E)-glutaconyl-CoA formation, the ketyl radical is subsequently reoxidized by electron transfer back to the HgdA-HgdB complex (CompD) to avoid change in oxidation state of the substrate. The appropriate redox state of dehydratase HgdA-HgdB complex (CompD) is maintained by HgdC (CompA) via hydrolysis of ATP and ATP-dependent electron transfer. Since the electron is recycled, the dehydratase is able to perform several turnovers with only catalytic amounts of ATP and substoichiometric amounts of HgdC (CompA). The polypeptide is (R)-2-hydroxyglutaryl-CoA dehydratase, subunit beta (Acidaminococcus fermentans (strain ATCC 25085 / DSM 20731 / CCUG 9996 / CIP 106432 / VR4)).